We begin with the raw amino-acid sequence, 785 residues long: Penicillin-binding protein 1A (785 aa).

The segment at 1 to 61 (MPPDDRLTAV…SGPGGPSGPG (61 aa)) is disordered. Residues 33–45 (SPPPKPPPPPPPG) show a composition bias toward pro residues. Over residues 46–59 (RGGGGPSGPGGPSG) the composition is skewed to gly residues. Residues 77–97 (IAVAVMVLLPLITFGMAYMIV) traverse the membrane as a helical segment. Positions 118-299 (GSEIARIVPP…RWNWVLDGMV (182 aa)) are transglycosylase. Glu-151 (proton donor; for transglycosylase activity) is an active-site residue. The transpeptidase stretch occupies residues 392 to 662 (AVVSIDPRTG…EGVKPLVNKW (271 aa)). The active-site Acyl-ester intermediate; for transpeptidase activity is Ser-426. 3 disordered regions span residues 605–626 (SRGHNLAGGRPSAAKTGTVQLG), 690–726 (ESFPKPTEIGGYAGVPQAPAAPPPSAGPPTDPGQPSV), and 738–785 (GITI…PPPP). Pro residues-rich tracts occupy residues 708-721 (PAAPPPSAGPPTDP) and 743-758 (IGPPTTVPVGPPPGAP). Low complexity predominate over residues 759 to 775 (GAPVGPGAPEVPVAPGA).

Its subcellular location is the cell membrane. It carries out the reaction [GlcNAc-(1-&gt;4)-Mur2Ac(oyl-L-Ala-gamma-D-Glu-L-Lys-D-Ala-D-Ala)](n)-di-trans,octa-cis-undecaprenyl diphosphate + beta-D-GlcNAc-(1-&gt;4)-Mur2Ac(oyl-L-Ala-gamma-D-Glu-L-Lys-D-Ala-D-Ala)-di-trans,octa-cis-undecaprenyl diphosphate = [GlcNAc-(1-&gt;4)-Mur2Ac(oyl-L-Ala-gamma-D-Glu-L-Lys-D-Ala-D-Ala)](n+1)-di-trans,octa-cis-undecaprenyl diphosphate + di-trans,octa-cis-undecaprenyl diphosphate + H(+). It catalyses the reaction Preferential cleavage: (Ac)2-L-Lys-D-Ala-|-D-Ala. Also transpeptidation of peptidyl-alanyl moieties that are N-acyl substituents of D-alanine.. The protein operates within cell wall biogenesis; peptidoglycan biosynthesis. Cell wall formation. Synthesis of cross-linked peptidoglycan from the lipid intermediates. The enzyme has a penicillin-insensitive transglycosylase N-terminal domain (formation of linear glycan strands) and a penicillin-sensitive transpeptidase C-terminal domain (cross-linking of the peptide subunits). The chain is Penicillin-binding protein 1A (ponA1) from Mycolicibacterium smegmatis (strain ATCC 700084 / mc(2)155) (Mycobacterium smegmatis).